A 288-amino-acid chain; its full sequence is N-glycosylase/DNA lyase (288 aa).

8-oxoguanine-binding residues include Q35, S62, and W73. Residues 134–203 are helix-hairpin-helix; the sequence is NPLVLVERPS…VACASISSEM (70 aa). K160 serves as the catalytic Schiff-base intermediate with DNA. Residues F164 and P189 each coordinate 8-oxoguanine. D191 is an active-site residue. 8-oxoguanine is bound by residues D238 and W242.

Belongs to the archaeal N-glycosylase/DNA lyase (AGOG) family.

The catalysed reaction is 2'-deoxyribonucleotide-(2'-deoxyribose 5'-phosphate)-2'-deoxyribonucleotide-DNA = a 3'-end 2'-deoxyribonucleotide-(2,3-dehydro-2,3-deoxyribose 5'-phosphate)-DNA + a 5'-end 5'-phospho-2'-deoxyribonucleoside-DNA + H(+). DNA repair enzyme that is part of the base excision repair (BER) pathway; protects from oxidative damage by removing the major product of DNA oxidation, 8-oxoguanine (GO), from single- and double-stranded DNA substrates. The polypeptide is N-glycosylase/DNA lyase (Aeropyrum pernix (strain ATCC 700893 / DSM 11879 / JCM 9820 / NBRC 100138 / K1)).